The following is a 429-amino-acid chain: Trigger factor (429 aa).

One can recognise a PPIase FKBP-type domain in the interval 164–249; it reads GDTAVIDFEG…VKEVKTKVLP (86 aa).

This sequence belongs to the FKBP-type PPIase family. Tig subfamily.

It is found in the cytoplasm. It catalyses the reaction [protein]-peptidylproline (omega=180) = [protein]-peptidylproline (omega=0). Involved in protein export. Acts as a chaperone by maintaining the newly synthesized protein in an open conformation. Functions as a peptidyl-prolyl cis-trans isomerase. The chain is Trigger factor from Lysinibacillus sphaericus (strain C3-41).